Here is a 372-residue protein sequence, read N- to C-terminus: Lipid-A-disaccharide synthase (372 aa).

The protein belongs to the LpxB family.

It catalyses the reaction a lipid X + a UDP-2-N,3-O-bis[(3R)-3-hydroxyacyl]-alpha-D-glucosamine = a lipid A disaccharide + UDP + H(+). It functions in the pathway bacterial outer membrane biogenesis; LPS lipid A biosynthesis. In terms of biological role, condensation of UDP-2,3-diacylglucosamine and 2,3-diacylglucosamine-1-phosphate to form lipid A disaccharide, a precursor of lipid A, a phosphorylated glycolipid that anchors the lipopolysaccharide to the outer membrane of the cell. The protein is Lipid-A-disaccharide synthase of Thiobacillus denitrificans (strain ATCC 25259 / T1).